The chain runs to 197 residues: Small ribosomal subunit protein uS4 (197 aa).

In terms of domain architecture, S4 RNA-binding spans Leu-87 to Lys-147.

The protein belongs to the universal ribosomal protein uS4 family. In terms of assembly, part of the 30S ribosomal subunit. Contacts protein S5. The interaction surface between S4 and S5 is involved in control of translational fidelity.

Its function is as follows. One of the primary rRNA binding proteins, it binds directly to 16S rRNA where it nucleates assembly of the body of the 30S subunit. In terms of biological role, with S5 and S12 plays an important role in translational accuracy. The protein is Small ribosomal subunit protein uS4 of Lachnospira eligens (strain ATCC 27750 / DSM 3376 / VPI C15-48 / C15-B4) (Eubacterium eligens).